A 66-amino-acid polypeptide reads, in one-letter code: Large ribosomal subunit protein bL31 (66 aa).

Zn(2+) contacts are provided by Cys16, Cys18, Cys36, and Cys39.

This sequence belongs to the bacterial ribosomal protein bL31 family. Type A subfamily. In terms of assembly, part of the 50S ribosomal subunit. Zn(2+) is required as a cofactor.

Binds the 23S rRNA. In Campylobacter fetus subsp. fetus (strain 82-40), this protein is Large ribosomal subunit protein bL31.